Reading from the N-terminus, the 378-residue chain is Cysteine endopeptidase RepA (378 aa).

Positions 1–24 (MLRCFLVAAAAVALAAAAAAPARA) are cleaved as a signal peptide. The propeptide at 25–141 (IPFTESDLSS…SFRYGGDDED (117 aa)) is activation peptide. 3 disulfides stabilise this stretch: Cys-164-Cys-206, Cys-198-Cys-239, and Cys-297-Cys-350. Cys-167 is a catalytic residue. Catalysis depends on residues His-303 and Asn-324.

It belongs to the peptidase C1 family.

It localises to the protein storage vacuole. Its function is as follows. Cysteine endopeptidase that digests in vitro both the acidic and basic subunits of glutelin, the major seed storage protein of rice. The protein is Cysteine endopeptidase RepA of Oryza sativa subsp. japonica (Rice).